The chain runs to 557 residues: Potassium-transporting ATPase potassium-binding subunit (557 aa).

12 helical membrane-spanning segments follow: residues 5 to 25, 63 to 83, 132 to 152, 170 to 190, 253 to 273, 283 to 303, 329 to 349, 356 to 376, 379 to 399, 416 to 436, 484 to 504, and 526 to 546; these read GFLL…PLGS, LCAI…MLLG, GLTV…FALI, LLRI…LFFI, FVQM…FGEV, LLWA…WAEV, VLVS…AVIA, ALGG…FGGV, GLYG…LMIG, LTAL…ALAM, LLAF…MAIA, and LFVG…FIPA.

It belongs to the KdpA family. In terms of assembly, the system is composed of three essential subunits: KdpA, KdpB and KdpC.

Its subcellular location is the cell inner membrane. Functionally, part of the high-affinity ATP-driven potassium transport (or Kdp) system, which catalyzes the hydrolysis of ATP coupled with the electrogenic transport of potassium into the cytoplasm. This subunit binds the periplasmic potassium ions and delivers the ions to the membrane domain of KdpB through an intramembrane tunnel. In Escherichia coli O157:H7, this protein is Potassium-transporting ATPase potassium-binding subunit.